The following is a 168-amino-acid chain: Cell division inhibitor SulA (168 aa).

The interval 105 to 111 (ALETGNY) is ftsZ binding. The interval 161-168 (RIHSGMVH) is lon protease binding.

It belongs to the SulA family. Interacts with FtsZ. Is rapidly cleaved and degraded by the Lon protease once DNA damage is repaired.

Functionally, component of the SOS system and an inhibitor of cell division. Accumulation of SulA causes rapid cessation of cell division and the appearance of long, non-septate filaments. In the presence of GTP, binds a polymerization-competent form of FtsZ in a 1:1 ratio, thus inhibiting FtsZ polymerization and therefore preventing it from participating in the assembly of the Z ring. This mechanism prevents the premature segregation of damaged DNA to daughter cells during cell division. The sequence is that of Cell division inhibitor SulA from Cronobacter sakazakii (strain ATCC BAA-894) (Enterobacter sakazakii).